A 968-amino-acid chain; its full sequence is RNA polymerase-associated protein RapA (968 aa).

The Helicase ATP-binding domain maps to D164–N334. D177–T184 is a binding site for ATP. Residues D280–H283 carry the DEAH box motif. Positions R490 to D644 constitute a Helicase C-terminal domain.

Belongs to the SNF2/RAD54 helicase family. RapA subfamily. In terms of assembly, interacts with the RNAP. Has a higher affinity for the core RNAP than for the holoenzyme. Its ATPase activity is stimulated by binding to RNAP.

Functionally, transcription regulator that activates transcription by stimulating RNA polymerase (RNAP) recycling in case of stress conditions such as supercoiled DNA or high salt concentrations. Probably acts by releasing the RNAP, when it is trapped or immobilized on tightly supercoiled DNA. Does not activate transcription on linear DNA. Probably not involved in DNA repair. The chain is RNA polymerase-associated protein RapA from Enterobacter sp. (strain 638).